Consider the following 302-residue polypeptide: Probable 2-(5''-triphosphoribosyl)-3'-dephosphocoenzyme-A synthase (302 aa).

It belongs to the CitG/MdcB family.

The catalysed reaction is 3'-dephospho-CoA + ATP = 2'-(5''-triphospho-alpha-D-ribosyl)-3'-dephospho-CoA + adenine. In Citrobacter koseri (strain ATCC BAA-895 / CDC 4225-83 / SGSC4696), this protein is Probable 2-(5''-triphosphoribosyl)-3'-dephosphocoenzyme-A synthase.